A 604-amino-acid chain; its full sequence is Protein hemingway (604 aa).

Disordered regions lie at residues 1–70, 103–309, 359–387, and 544–585; these read MSGA…GNPH, NQLS…PTSQ, SDRR…GGGI, and TIKA…IDLD. Acidic residues-rich tracts occupy residues 8–38, 135–183, 194–214, and 288–300; these read SDEE…YIEP, EDEA…DDAQ, DDSD…EDEP, and EEPE…EENQ. Low complexity predominate over residues 368 to 379; the sequence is EMSSMTETTMTS.

It belongs to the CFAP97 family. As to expression, detected in ciliated sensory neurons at all stages of development, and in adult testis.

The protein localises to the cell projection. It is found in the cilium. The protein resides in the perikaryon. It localises to the cytoplasm. In terms of biological role, involved in assembly and/or maintenance of motile cilia. Required during spermatogenesis for axoneme elongation. Necessary for optimal function of the chordotonal (hearing) organs. The sequence is that of Protein hemingway from Drosophila melanogaster (Fruit fly).